The following is a 206-amino-acid chain: Putative 3-methyladenine DNA glycosylase (206 aa).

Belongs to the DNA glycosylase MPG family.

In Rhodopseudomonas palustris (strain ATCC BAA-98 / CGA009), this protein is Putative 3-methyladenine DNA glycosylase.